Reading from the N-terminus, the 385-residue chain is Xanthosine methyltransferase 2 (385 aa).

Y18 serves as a coordination point for S-adenosyl-L-homocysteine. N21 and N25 together coordinate xanthosine. 7 residues coordinate S-adenosyl-L-homocysteine: C62, N67, D101, L102, S140, F141, and C157. Y158 provides a ligand contact to xanthosine. C159 provides a ligand contact to S-adenosyl-L-homocysteine. Residues H161 and W162 each contribute to the xanthosine site. 4 residues coordinate Mg(2+): N179, D261, F263, and N264. Residues S329, Y334, and Y369 each coordinate xanthosine.

Belongs to the methyltransferase superfamily. Type-7 methyltransferase family. It depends on Mg(2+) as a cofactor. Expressed at low levels in young leaves but not in mature leaves. Barely detectable in fruits (grains).

The catalysed reaction is xanthosine + S-adenosyl-L-methionine = 7-methylxanthosine + S-adenosyl-L-homocysteine. The protein operates within alkaloid biosynthesis. Involved in the biosynthesis of caffeine. Specific for xanthosine and could not use xanthosine 5'-monophosphate (XMP) as substrate. Catalyzes the 7-N-methylation activity of xanthosine, but does not have 1-N- or 3-N-methylation activity. The sequence is that of Xanthosine methyltransferase 2 from Coffea arabica (Arabian coffee).